The sequence spans 119 residues: Large ribosomal subunit protein bL20 (119 aa).

Belongs to the bacterial ribosomal protein bL20 family.

Functionally, binds directly to 23S ribosomal RNA and is necessary for the in vitro assembly process of the 50S ribosomal subunit. It is not involved in the protein synthesizing functions of that subunit. The sequence is that of Large ribosomal subunit protein bL20 from Acidovorax sp. (strain JS42).